Consider the following 413-residue polypeptide: Divalent metal cation transporter MntH (413 aa).

At 1-19 the chain is on the cytoplasmic side; the sequence is MTDNRVENSSGRAARKLRL. Residues 20–39 form a helical membrane-spanning segment; the sequence is ALMGPAFIAAIGYIDPGNFA. At 40–51 the chain is on the periplasmic side; the sequence is TNIQAGASFGYQ. The helical transmembrane segment at 52-71 threads the bilayer; it reads LLWVVVWANLMAMLIQILSA. The Cytoplasmic segment spans residues 72 to 95; that stretch reads KLGIATGKNLAEQIRDHYPRPVVW. Residues 96–118 traverse the membrane as a helical segment; it reads FYWVQAEIIAMATDLAEFIGAAI. The Periplasmic segment spans residues 119-125; the sequence is GFKLILG. The helical transmembrane segment at 126 to 145 threads the bilayer; sequence VSLLQGAVLTGIATFLILML. Residues 146–155 are Cytoplasmic-facing; the sequence is QRRGQKPLEK. The helical transmembrane segment at 156-175 threads the bilayer; it reads VIGGLLLFVAAAYIVELFFS. The Periplasmic portion of the chain corresponds to 176–196; the sequence is QPDMAQLGKGMVIPALPNPEA. Residues 197–220 form a helical membrane-spanning segment; it reads VFLAAGVLGATIMPHVIYLHSSLT. The Cytoplasmic segment spans residues 221-238; it reads QHLHGGTRQQRYSATKWD. Residues 239-258 traverse the membrane as a helical segment; sequence VAIAMTIAGFVNLAMMATAA. At 259–276 the chain is on the periplasmic side; sequence AAFHFSGHTGIADLDQAY. Residues 277 to 297 form a helical membrane-spanning segment; that stretch reads LTLEPLLSHAAATVFGLSLVA. The Cytoplasmic portion of the chain corresponds to 298–327; sequence AGLSSTVVGTLAGQVVMQGFVRFHIPLWVR. A helical membrane pass occupies residues 328 to 344; that stretch reads RTITMLPSFIVILMGLD. The Periplasmic segment spans residues 345-350; the sequence is PTRILV. A helical membrane pass occupies residues 351–370; sequence MSQVLLSFGIALALVPLLIF. Over 371–387 the chain is Cytoplasmic; it reads TSNATLMGELVNTRRVK. The helical transmembrane segment at 388 to 406 threads the bilayer; the sequence is QVGWIIVVLVVALNIWLLV. Residues 407-413 are Periplasmic-facing; the sequence is GTVMGLS.

The protein belongs to the NRAMP family.

The protein localises to the cell inner membrane. H(+)-stimulated, divalent metal cation uptake system. The protein is Divalent metal cation transporter MntH of Salmonella paratyphi C (strain RKS4594).